We begin with the raw amino-acid sequence, 1401 residues long: DNA-directed RNA polymerase subunit beta' (1401 aa).

4 residues coordinate Zn(2+): Cys70, Cys72, Cys85, and Cys88. Residues Asp460, Asp462, and Asp464 each coordinate Mg(2+). 4 residues coordinate Zn(2+): Cys808, Cys882, Cys889, and Cys892.

It belongs to the RNA polymerase beta' chain family. The RNAP catalytic core consists of 2 alpha, 1 beta, 1 beta' and 1 omega subunit. When a sigma factor is associated with the core the holoenzyme is formed, which can initiate transcription. Requires Mg(2+) as cofactor. Zn(2+) serves as cofactor.

It carries out the reaction RNA(n) + a ribonucleoside 5'-triphosphate = RNA(n+1) + diphosphate. In terms of biological role, DNA-dependent RNA polymerase catalyzes the transcription of DNA into RNA using the four ribonucleoside triphosphates as substrates. The chain is DNA-directed RNA polymerase subunit beta' from Legionella pneumophila (strain Corby).